A 494-amino-acid polypeptide reads, in one-letter code: 3-octaprenyl-4-hydroxybenzoate carboxy-lyase (494 aa).

Asn-172 contacts Mn(2+). Residues 175–177 (IYR), 189–191 (RWL), and 194–195 (RG) each bind prenylated FMN. Residue Glu-238 coordinates Mn(2+). Asp-294 acts as the Proton donor in catalysis.

The protein belongs to the UbiD family. As to quaternary structure, homohexamer. Prenylated FMN serves as cofactor. Mn(2+) is required as a cofactor.

The protein localises to the cell membrane. The catalysed reaction is a 4-hydroxy-3-(all-trans-polyprenyl)benzoate + H(+) = a 2-(all-trans-polyprenyl)phenol + CO2. The protein operates within cofactor biosynthesis; ubiquinone biosynthesis. Its function is as follows. Catalyzes the decarboxylation of 3-octaprenyl-4-hydroxy benzoate to 2-octaprenylphenol, an intermediate step in ubiquinone biosynthesis. The polypeptide is 3-octaprenyl-4-hydroxybenzoate carboxy-lyase (Janthinobacterium sp. (strain Marseille) (Minibacterium massiliensis)).